Here is a 427-residue protein sequence, read N- to C-terminus: MPSIEAVGAREILDSRGNPTVEVEVVLEDGTLGRAAVPSGASTGAFEAVELRDGDNRYGGKGVTKAVAAVIDRIGPAIMELEATEQRLLDATLIDLDGTPGKSALGANALLGVSLAVAKAAAASSGLPLFRYLGGPTAHLLPVPMMNILNGGAHADTNVDIQEFMIAPIGASTFAESLRWGAEVYHALKSVLKARGLATGVGDEGGFAPSLPTNREALDLIAEGIDKAGFALGTDIALALDVASTEFYADGSYTFEGNSRSAEYLSDYYAELVSAYPIVSIEDPLAEDDWDGWVALTERLGGKVQLVGDDLFVTNPERLARGIALKAANALLVKVNQIGTLTETLDAVNLAHRSGYRAMMSHRSGETEDTTIADLAVAVDCGQIKTGAPARSERVAKYNQLLRIEEELDDAARYAGAAAFPRRRQAG.

Residue glutamine 162 participates in (2R)-2-phosphoglycerate binding. The active-site Proton donor is glutamate 204. Mg(2+) is bound by residues aspartate 241, glutamate 282, and aspartate 309. (2R)-2-phosphoglycerate is bound by residues lysine 334, arginine 363, serine 364, and lysine 385. Catalysis depends on lysine 334, which acts as the Proton acceptor.

Belongs to the enolase family. It depends on Mg(2+) as a cofactor.

The protein resides in the cytoplasm. The protein localises to the secreted. It localises to the cell surface. The catalysed reaction is (2R)-2-phosphoglycerate = phosphoenolpyruvate + H2O. Its pathway is carbohydrate degradation; glycolysis; pyruvate from D-glyceraldehyde 3-phosphate: step 4/5. Functionally, catalyzes the reversible conversion of 2-phosphoglycerate (2-PG) into phosphoenolpyruvate (PEP). It is essential for the degradation of carbohydrates via glycolysis. This chain is Enolase, found in Frankia casuarinae (strain DSM 45818 / CECT 9043 / HFP020203 / CcI3).